Here is a 234-residue protein sequence, read N- to C-terminus: Venom allergen 3 (234 aa).

Residues 1–22 (MELIVSILWLAITAENLANTLA) form the signal peptide. 4 cysteine pairs are disulfide-bonded: Cys-26-Cys-41, Cys-31-Cys-125, Cys-52-Cys-118, and Cys-198-Cys-216. One can recognise an SCP domain in the interval 69–218 (VNKHNELRQR…WTKHYLVCNY (150 aa)). The disordered stretch occupies residues 80–99 (ASGKEMRGTNGPQPPAVKMP).

It belongs to the CRISP family. As to expression, expressed by the venom gland.

It is found in the secreted. The sequence is that of Venom allergen 3 from Solenopsis invicta (Red imported fire ant).